The sequence spans 918 residues: Isoleucine--tRNA ligase (918 aa).

The 'HIGH' region motif lies at Pro57–Thr67. Residue Glu552 participates in L-isoleucyl-5'-AMP binding. Positions Lys593–Ser597 match the 'KMSKS' region motif. Lys596 is a binding site for ATP. Positions 886, 889, 906, and 909 each coordinate Zn(2+).

It belongs to the class-I aminoacyl-tRNA synthetase family. IleS type 1 subfamily. As to quaternary structure, monomer. It depends on Zn(2+) as a cofactor.

It localises to the cytoplasm. The catalysed reaction is tRNA(Ile) + L-isoleucine + ATP = L-isoleucyl-tRNA(Ile) + AMP + diphosphate. Functionally, catalyzes the attachment of isoleucine to tRNA(Ile). As IleRS can inadvertently accommodate and process structurally similar amino acids such as valine, to avoid such errors it has two additional distinct tRNA(Ile)-dependent editing activities. One activity is designated as 'pretransfer' editing and involves the hydrolysis of activated Val-AMP. The other activity is designated 'posttransfer' editing and involves deacylation of mischarged Val-tRNA(Ile). This chain is Isoleucine--tRNA ligase, found in Thermotoga neapolitana (strain ATCC 49049 / DSM 4359 / NBRC 107923 / NS-E).